The following is a 355-amino-acid chain: Syntaxin-5 (355 aa).

At 1–333 (MIPRKRYGSK…KYFQSVTSNR (333 aa)) the chain is on the cytoplasmic side. Positions 245 to 247 (IDM) match the IxM motif; signal for cargo packaging into COPII-coated vesicles motif. The t-SNARE coiled-coil homology domain occupies 263–325 (DSYIQSRADT…EAAHSEILKY (63 aa)). A coiled-coil region spans residues 287 to 318 (FQQLAHMVKEQEETIQRIDENVLGAQLDVEAA). The chain crosses the membrane as a helical; Anchor for type IV membrane protein span at residues 334–354 (WLMVKIFLILIVFFIIFVVFL). A355 is a topological domain (vesicular).

The protein belongs to the syntaxin family. In terms of assembly, part of a ternary complex containing STX5A, NSFL1C and VCP. Part of a unique SNARE complex composed of the Golgi SNAREs GOSR1, GOSR2 and YKT6. This complex also includes VTI1A. Component of a SNARE complex consisting of STX5, YKT6, GOSR1 and BET1L. Interacts with BET1L. Interacts with BET1. Interacts with COG4. Interacts with GM130/GOLGA2. Interacts (via IxM motif) with SEC24C and SEC24D; mediates STX5 packaging into COPII-coated vesicles. Interacts with VLDLR; this interaction mediates VLDLR translocation from the endoplasmic reticulum to the plasma membrane. Expressed in the brain, heart, spleen, lung, liver, kidney and testis.

The protein resides in the endoplasmic reticulum-Golgi intermediate compartment membrane. The protein localises to the golgi apparatus membrane. Mediates endoplasmic reticulum to Golgi transport. Together with p115/USO1 and GM130/GOLGA2, involved in vesicle tethering and fusion at the cis-Golgi membrane to maintain the stacked and inter-connected structure of the Golgi apparatus. Functionally, required for Golgi to endoplasmic reticulum retrogade transport, and for intra-Golgi transport. This Rattus norvegicus (Rat) protein is Syntaxin-5 (Stx5).